The primary structure comprises 201 residues: Regulator of G-protein signaling rgs-1 (201 aa).

Positions 37–156 constitute an RGS domain; the sequence is SWQQSFDTLM…FLTSIFYRET (120 aa). Positions 168–201 are disordered; sequence GGDEEKEREQRAERARLNVPATAAEGSSKDISMV. The span at 170-183 shows a compositional bias: basic and acidic residues; sequence DEEKEREQRAERAR.

Expressed in most or all neurons.

Functionally, inhibits G protein signaling in nervous system, interacting preferentially with the G(O) subfamily member goa-1. In vitro, protein acts as a GTPase activator of goa-1. Rgs-1 and rgs-2 redundantly adjust signaling when worms are fed to allow rapid induction of egg-laying behavior. This is Regulator of G-protein signaling rgs-1 (rgs-1) from Caenorhabditis elegans.